Reading from the N-terminus, the 380-residue chain is uncharacterized protein (380 aa).

This is an uncharacterized protein from Sinorhizobium fredii (strain NBRC 101917 / NGR234).